The chain runs to 1513 residues: DNA polymerase alpha catalytic subunit (1513 aa).

The segment at 235-254 is disordered; that stretch reads STNQNANASDSKRVSNQTND. Positions 1344, 1347, 1370, 1373, 1404, 1409, 1422, and 1427 each coordinate Zn(2+). The CysA-type zinc finger occupies 1344-1373; the sequence is CPHCSESYHFPGIFQDGKNNTLSGLLCIKC. The CysB motif signature appears at 1404–1427; the sequence is CQEPACGAVSRQLLYNNKCINLAC.

Belongs to the DNA polymerase type-B family.

Its subcellular location is the nucleus. The enzyme catalyses DNA(n) + a 2'-deoxyribonucleoside 5'-triphosphate = DNA(n+1) + diphosphate. Functionally, polymerase alpha in a complex with DNA primase is a replicative polymerase. The protein is DNA polymerase alpha catalytic subunit of Oxytricha trifallax (Sterkiella histriomuscorum).